Reading from the N-terminus, the 112-residue chain is Cytochrome c (112 aa).

Cysteine 23, cysteine 26, and histidine 27 together coordinate heme c. Lysine 81 carries the N6,N6,N6-trimethyllysine modification. Residue methionine 89 coordinates heme c. Residue lysine 95 is modified to N6,N6,N6-trimethyllysine.

Belongs to the cytochrome c family. Binds 1 heme c group covalently per subunit.

It localises to the mitochondrion intermembrane space. Electron carrier protein. The oxidized form of the cytochrome c heme group can accept an electron from the heme group of the cytochrome c1 subunit of cytochrome reductase. Cytochrome c then transfers this electron to the cytochrome oxidase complex, the final protein carrier in the mitochondrial electron-transport chain. In Arabidopsis thaliana (Mouse-ear cress), this protein is Cytochrome c (CC-1).